Consider the following 370-residue polypeptide: Adaptive-response sensory kinase SasA (370 aa).

The region spanning 152–365 (MVAHELRTPL…CFYLTVPVWQ (214 aa)) is the Histidine kinase domain. Position 155 is a phosphohistidine; by autocatalysis (His-155).

As to quaternary structure, homooligomerizes. Interacts with KaiC. Participates in the KaiBC complex, whose core is composed of a KaiC homohexamer and 6 KaiB.

It catalyses the reaction ATP + protein L-histidine = ADP + protein N-phospho-L-histidine.. Functionally, member of the two-component regulatory system SasA/RpaA involved in genome-wide circadian gene expression. One of several clock output pathways. Participates in the Kai clock protein complex, the main circadian regulator in cyanobacteria, via its interaction with KaiC. KaiC enhances the autophosphorylation activity of SasA, which then transfers its phosphate group to RpaA to activate it. In addition to its output function, recruits fold-shifted KaiB (KaiB(fs)) to KaiC to cooperatively form the KaiB(6):KaiC(6) complex (independent of SasA kinase activity). Required for robustness of the circadian rhythm of gene expression and is involved in clock output, also required for adaptation to light/dark cycles. This chain is Adaptive-response sensory kinase SasA, found in Prochlorococcus marinus (strain MIT 9313).